A 126-amino-acid polypeptide reads, in one-letter code: Small ribosomal subunit protein uS12 (126 aa).

Residue Asp-89 is modified to 3-methylthioaspartic acid.

It belongs to the universal ribosomal protein uS12 family. In terms of assembly, part of the 30S ribosomal subunit. Contacts proteins S8 and S17. May interact with IF1 in the 30S initiation complex.

Its function is as follows. With S4 and S5 plays an important role in translational accuracy. In terms of biological role, interacts with and stabilizes bases of the 16S rRNA that are involved in tRNA selection in the A site and with the mRNA backbone. Located at the interface of the 30S and 50S subunits, it traverses the body of the 30S subunit contacting proteins on the other side and probably holding the rRNA structure together. The combined cluster of proteins S8, S12 and S17 appears to hold together the shoulder and platform of the 30S subunit. In Polynucleobacter asymbioticus (strain DSM 18221 / CIP 109841 / QLW-P1DMWA-1) (Polynucleobacter necessarius subsp. asymbioticus), this protein is Small ribosomal subunit protein uS12.